The primary structure comprises 537 residues: Cytochrome P450 734A5 (537 aa).

Residues 13–33 (GAAAVAVAAAAAWVAVYAAAA) form a helical membrane-spanning segment. Position 480 (cysteine 480) interacts with heme.

This sequence belongs to the cytochrome P450 family. It depends on heme as a cofactor. In terms of tissue distribution, exclusively expressed in roots.

It localises to the membrane. In terms of biological role, cytochrome P450 probably involved in brassinosteroids (BRs) inactivation and regulation of BRs homeostasis. The polypeptide is Cytochrome P450 734A5 (CYP734A5) (Oryza sativa subsp. japonica (Rice)).